Consider the following 339-residue polypeptide: DNA double-strand break repair nuclease NurA (339 aa).

Mn(2+)-binding residues include Asp58 and Asp133.

The protein belongs to the NurA family. In terms of assembly, homodimer. Forms a complex with HerA. Mn(2+) serves as cofactor.

Nuclease activity requires the presence of HerA. Another report shows endo- and exonuclease activity in the absence of HerA; HerA stimulates the exo- but not endonuclease. LhrC-Core (Hel112) inhibits the exonuclease activity of the HerA-NurA complex on ss- and dsDNA, has no effect on the nicking activity of NurA. Endo- and exonuclease activities are inhibited by ATP; ATP may subtract divalent ions from the reaction preventing nuclease activity, HerA can alleviate ATP inhibition. Its function is as follows. Involved in DNA double-strand break (DSB) repair. Probably acts with HerA to stimulate resection of the 5' strand and produce the long 3' single-strand that is required for RadA loading. NurA and HerA together stimulate the end-resection of six nucleotides of a linear DNA substrate. Processes linear double-stranded (ds)DNA probes with 3' or 5' single-stranded overhangs or blunt ends. Has endonuclease activity on single-stranded (ss)DNA and nicking activity on dsDNA without HerA as well as 5'- and 3'-exonuclease activity on ssDNA. Binds ssDNA, dsDNA, forked and bubble DNA equally well. The sequence is that of DNA double-strand break repair nuclease NurA from Saccharolobus solfataricus (strain ATCC 35092 / DSM 1617 / JCM 11322 / P2) (Sulfolobus solfataricus).